We begin with the raw amino-acid sequence, 139 residues long: Putative pre-16S rRNA nuclease (139 aa).

The protein belongs to the YqgF nuclease family.

It is found in the cytoplasm. Its function is as follows. Could be a nuclease involved in processing of the 5'-end of pre-16S rRNA. The polypeptide is Putative pre-16S rRNA nuclease (Streptococcus thermophilus (strain ATCC BAA-491 / LMD-9)).